The following is a 272-amino-acid chain: PHD finger protein ALFIN-LIKE 6 (272 aa).

Gly residues predominate over residues 1–23 (MEGGGGGGGGGGGGGGGGGGGGA). Disordered regions lie at residues 1–24 (MEGG…GGAP) and 162–218 (QAKE…DNTL). The segment covering 168-182 (PNSSSKSNKPSSKVQ) has biased composition (low complexity). Positions 183-200 (SKAESRSKSKLSAPKDEE) are enriched in basic and acidic residues. Positions 201–214 (GSGDDEGEEEEDDH) are enriched in acidic residues. The PHD-type zinc finger occupies 216-268 (NTLCGTCGTNDGKDEFWICCDNCEKWYHGKCVKITPARAEHIKQYKCPDCTNK).

This sequence belongs to the Alfin family.

Its subcellular location is the nucleus. In terms of biological role, histone-binding component that specifically recognizes H3 tails trimethylated on 'Lys-4' (H3K4me3), which mark transcription start sites of virtually all active genes. The sequence is that of PHD finger protein ALFIN-LIKE 6 from Oryza sativa subsp. indica (Rice).